The primary structure comprises 817 residues: Dolichyl-phosphate-mannose--protein mannosyltransferase 1 (817 aa).

Ser-2 is modified (N-acetylserine). The Cytoplasmic segment spans residues 2–50 (SEEKTYKRVEQDDPVPELDIKQGPVRPFIVTDPSAELASLRTMVTLKEK). Residues 51–70 (LLVACLAVFTAVIRLHGLAW) form a helical membrane-spanning segment. The Lumenal portion of the chain corresponds to 71-135 (PDSVVFDEVH…DSFPSTTPYV (65 aa)). A helical membrane pass occupies residues 136–154 (LMRFFSASLGALTVILMYM). The Cytoplasmic segment spans residues 155 to 179 (TLRYSGVRMWVALMSAICFAVENSY). The chain crosses the membrane as a helical span at residues 180–200 (VTISRYILLDAPLMFFIAAAV). The Lumenal segment spans residues 201 to 234 (YSFKKYEMYPANSLNAYKSLLATGIALGMASSSK). A helical membrane pass occupies residues 235–259 (WVGLFTVTWVGLLCIWRLWFMIGDL). Over 260-273 (TKSSKSIFKVAFAK) the chain is Cytoplasmic. A helical membrane pass occupies residues 274–291 (LAFLLGVPFALYLVFFYI). Residues 292-584 (HFQSLTLDGD…GENNRNVYLL (293 aa)) are Lumenal-facing. MIR domains follow at residues 324–378 (VADV…LELY), 388–448 (FQNL…VEID), and 459–514 (ERVI…VENN). Asn-390 and Asn-513 each carry an N-linked (GlcNAc...) asparagine glycan. Residues 585-605 (GNAIVWWAVTAFIGIFGLIVI) form a helical membrane-spanning segment. Topologically, residues 606–685 (TELFSWQLGK…SYVFRSKRQM (80 aa)) are cytoplasmic. The chain crosses the membrane as a helical span at residues 686–710 (GYAVVITFLAASVYFFKSFSPIIYG). The Lumenal portion of the chain corresponds to 711-817 (TPWTQELCQK…LKVEKRAVLE (107 aa)). A glycan (N-linked (GlcNAc...) asparagine) is linked at Asn-743.

Belongs to the glycosyltransferase 39 family. In terms of assembly, PMT1 and PMT2 form a functional heterodimer. The complex interacts with endoplasmic reticulum proteins EMP24, ERV25, ERP1, ERP2, CDC48, HRD1, USA1, YOS9, ERO1, PDI1, UBR1, Cue4, DFM1 and TED1. Forms also a minor complex with PMT3.

The protein resides in the endoplasmic reticulum membrane. The catalysed reaction is a di-trans,poly-cis-dolichyl beta-D-mannosyl phosphate + L-seryl-[protein] = 3-O-(alpha-D-mannosyl)-L-seryl-[protein] + a di-trans,poly-cis-dolichyl phosphate + H(+). The enzyme catalyses a di-trans,poly-cis-dolichyl beta-D-mannosyl phosphate + L-threonyl-[protein] = 3-O-(alpha-D-mannosyl)-L-threonyl-[protein] + a di-trans,poly-cis-dolichyl phosphate + H(+). The protein operates within protein modification; protein glycosylation. In terms of biological role, protein O-mannosyltransferase involved in O-glycosylation which is essential for cell wall rigidity. Forms a heterodimeric complex with PMT2 and more rarely with PMT3 to transfer mannose from Dol-P-mannose to Ser or Thr residues on proteins. The PMT1-PMT2 complex participates in oxidative protein folding, ER-associated protein degradation (ERAD), as well as ER export. Required for incorporation of proteins in the cell wall. The polypeptide is Dolichyl-phosphate-mannose--protein mannosyltransferase 1 (Saccharomyces cerevisiae (strain ATCC 204508 / S288c) (Baker's yeast)).